We begin with the raw amino-acid sequence, 142 residues long: Transcriptional regulator MraZ (142 aa).

SpoVT-AbrB domains lie at 5 to 51 (ASSL…PRPE) and 77 to 120 (AMDV…DKAT).

The protein belongs to the MraZ family. As to quaternary structure, forms oligomers.

Its subcellular location is the cytoplasm. It is found in the nucleoid. The polypeptide is Transcriptional regulator MraZ (Acidovorax ebreus (strain TPSY) (Diaphorobacter sp. (strain TPSY))).